We begin with the raw amino-acid sequence, 540 residues long: MKIMKFIFITGGVISSLGKGITAASLGRLLKARGFKVNMIKIDPYLQIDAGTMSPYEHGEVFVTEDGGESDLDLGHYERFIDENLTKNNNITTGKIYWSVLTKERKGEYLGKTVQVIPHITNEIKDWIKNLGEGYDITIVEIGGTVGDIESLPFLEAIRQFKKDVGKENVLYIHVSLLPYIRAAGELKTKPTQHSVKELRSIGIQPDILICRTEMPISDKIREKLALFCDVDKEAVIEARDARTIYEVPLNLEKEGLGKLVTKKLNLPDREPDLDEWRKFVDRVINPLNEVTIGIVGKYVELKDAYLSITEALIHAGAKNDTKVNINWIHSERLESEEFEELLDRYREDNQLDGILVPGGFGDRGVEGKINAIKYARENDIPFLGICMGMQCAVIEFARNVCGLEGANSTEFDENTKYPVVDLLPEQKEIDAKGGTMRLGAYPAILMEGTLAYKLYGRKEVYERHRHRYEVNPEYHEILENHGLTISGKSPDGRLAEFIEISKNRYFIATQAHPEFKSRPNKPHPLFDGLVRASLGEKIK.

An amidoligase domain region spans residues 1 to 267 (MKIMKFIFIT…GKLVTKKLNL (267 aa)). Serine 15 serves as a coordination point for CTP. Serine 15 contacts UTP. 16–21 (SLGKGI) contributes to the ATP binding site. Residue tyrosine 56 coordinates L-glutamine. Aspartate 73 provides a ligand contact to ATP. Mg(2+) is bound by residues aspartate 73 and glutamate 141. Residues 148-150 (DIE), 188-193 (KTKPTQ), and lysine 224 contribute to the CTP site. UTP-binding positions include 188 to 193 (KTKPTQ) and lysine 224. 240–242 (RDA) is an ATP binding site. One can recognise a Glutamine amidotransferase type-1 domain in the interval 292–540 (TIGIVGKYVE…VRASLGEKIK (249 aa)). Residue glycine 360 coordinates L-glutamine. Cysteine 387 serves as the catalytic Nucleophile; for glutamine hydrolysis. Residues 388 to 391 (MGMQ), glutamate 411, and arginine 468 each bind L-glutamine. Residues histidine 513 and glutamate 515 contribute to the active site.

This sequence belongs to the CTP synthase family. In terms of assembly, homotetramer.

It carries out the reaction UTP + L-glutamine + ATP + H2O = CTP + L-glutamate + ADP + phosphate + 2 H(+). The enzyme catalyses L-glutamine + H2O = L-glutamate + NH4(+). It catalyses the reaction UTP + NH4(+) + ATP = CTP + ADP + phosphate + 2 H(+). The protein operates within pyrimidine metabolism; CTP biosynthesis via de novo pathway; CTP from UDP: step 2/2. With respect to regulation, allosterically activated by GTP, when glutamine is the substrate; GTP has no effect on the reaction when ammonia is the substrate. The allosteric effector GTP functions by stabilizing the protein conformation that binds the tetrahedral intermediate(s) formed during glutamine hydrolysis. Inhibited by the product CTP, via allosteric rather than competitive inhibition. Its function is as follows. Catalyzes the ATP-dependent amination of UTP to CTP with either L-glutamine or ammonia as the source of nitrogen. Regulates intracellular CTP levels through interactions with the four ribonucleotide triphosphates. The sequence is that of CTP synthase from Methanocaldococcus jannaschii (strain ATCC 43067 / DSM 2661 / JAL-1 / JCM 10045 / NBRC 100440) (Methanococcus jannaschii).